The primary structure comprises 307 residues: Cytochrome c1 2, heme protein, mitochondrial (307 aa).

Residues M1–A64 constitute a mitochondrion transit peptide. Residues D65 to M270 lie on the Mitochondrial intermembrane side of the membrane. The Cytochrome c domain maps to A90 to L197. The heme c site is built by C103, C106, H107, and M226. A helical transmembrane segment spans residues G271 to Y288. Topologically, residues R289–N307 are mitochondrial matrix.

Belongs to the cytochrome c family. Component of the ubiquinol-cytochrome c oxidoreductase (cytochrome b-c1 complex, complex III, CIII), a multisubunit enzyme composed of 10 subunits. The complex is composed of 3 respiratory subunits cytochrome b (MT-CYB), cytochrome c1 (CYC1-1 or CYC1-2) and Rieske protein (UCR1-1 or UCR1-2), 2 core protein subunits MPPalpha1 (or MPPalpha2) and MPPB, and 5 low-molecular weight protein subunits QCR7-1 (or QCR7-2), UCRQ-1 (or UCRQ-2), QCR9, UCRY and probably QCR6-1 (or QCR6-2). The complex exists as an obligatory dimer and forms supercomplexes (SCs) in the inner mitochondrial membrane with NADH-ubiquinone oxidoreductase (complex I, CI), resulting in different assemblies (supercomplexes SCI(1)III(2) and SCI(2)III(4)). In terms of processing, binds 1 heme c group covalently per subunit.

It is found in the mitochondrion inner membrane. Its function is as follows. Component of the ubiquinol-cytochrome c oxidoreductase, a multisubunit transmembrane complex that is part of the mitochondrial electron transport chain which drives oxidative phosphorylation. The respiratory chain contains 3 multisubunit complexes succinate dehydrogenase (complex II, CII), ubiquinol-cytochrome c oxidoreductase (cytochrome b-c1 complex, complex III, CIII) and cytochrome c oxidase (complex IV, CIV), that cooperate to transfer electrons derived from NADH and succinate to molecular oxygen, creating an electrochemical gradient over the inner membrane that drives transmembrane transport and the ATP synthase. The cytochrome b-c1 complex catalyzes electron transfer from ubiquinol to cytochrome c, linking this redox reaction to translocation of protons across the mitochondrial inner membrane, with protons being carried across the membrane as hydrogens on the quinol. In the process called Q cycle, 2 protons are consumed from the matrix, 4 protons are released into the intermembrane space and 2 electrons are passed to cytochrome c. Cytochrome c1 is a catalytic core subunit containing a c-type heme. It transfers electrons from the [2Fe-2S] iron-sulfur cluster of the Rieske protein to cytochrome c. The sequence is that of Cytochrome c1 2, heme protein, mitochondrial (CYC1-2) from Arabidopsis thaliana (Mouse-ear cress).